Here is a 105-residue protein sequence, read N- to C-terminus: Thioredoxin (105 aa).

The Thioredoxin domain maps to 1-105 (ATMTLTDANF…LEAQLADVLQ (105 aa)). Cys29 and Cys32 form a disulfide bridge.

Participates in various redox reactions through the reversible oxidation of its active center dithiol to a disulfide and catalyzes dithiol-disulfide exchange reactions. The polypeptide is Thioredoxin (trxA) (Alicyclobacillus acidocaldarius subsp. acidocaldarius (Bacillus acidocaldarius)).